Reading from the N-terminus, the 585-residue chain is Urease subunit alpha (585 aa).

The 454-residue stretch at 132-585 (GGIDTHIHFI…LPMAQRYFLF (454 aa)) folds into the Urease domain. 3 residues coordinate Ni(2+): H137, H139, and K220. Position 220 is an N6-carboxylysine (K220). Substrate is bound at residue H222. Ni(2+)-binding residues include H249 and H275. H323 serves as the catalytic Proton donor. D363 is a Ni(2+) binding site.

The protein belongs to the metallo-dependent hydrolases superfamily. Urease alpha subunit family. In terms of assembly, heterotrimer of UreA (gamma), UreB (beta) and UreC (alpha) subunits. Three heterotrimers associate to form the active enzyme. The cofactor is Ni cation. Post-translationally, carboxylation allows a single lysine to coordinate two nickel ions.

Its subcellular location is the cytoplasm. It catalyses the reaction urea + 2 H2O + H(+) = hydrogencarbonate + 2 NH4(+). Its pathway is nitrogen metabolism; urea degradation; CO(2) and NH(3) from urea (urease route): step 1/1. The protein is Urease subunit alpha of Pseudarthrobacter chlorophenolicus (strain ATCC 700700 / DSM 12829 / CIP 107037 / JCM 12360 / KCTC 9906 / NCIMB 13794 / A6) (Arthrobacter chlorophenolicus).